The chain runs to 487 residues: ATP synthase subunit beta (487 aa).

164-171 (GGAGVGKT) contributes to the ATP binding site.

Belongs to the ATPase alpha/beta chains family. In terms of assembly, F-type ATPases have 2 components, CF(1) - the catalytic core - and CF(0) - the membrane proton channel. CF(1) has five subunits: alpha(3), beta(3), gamma(1), delta(1), epsilon(1). CF(0) has four main subunits: a(1), b(1), b'(1) and c(9-12).

It localises to the cellular thylakoid membrane. It carries out the reaction ATP + H2O + 4 H(+)(in) = ADP + phosphate + 5 H(+)(out). Functionally, produces ATP from ADP in the presence of a proton gradient across the membrane. The catalytic sites are hosted primarily by the beta subunits. The sequence is that of ATP synthase subunit beta from Synechococcus sp. (strain CC9311).